We begin with the raw amino-acid sequence, 431 residues long: Glutamate-1-semialdehyde 2,1-aminomutase (431 aa).

The residue at position 265 (lysine 265) is an N6-(pyridoxal phosphate)lysine.

The protein belongs to the class-III pyridoxal-phosphate-dependent aminotransferase family. HemL subfamily. In terms of assembly, homodimer. Requires pyridoxal 5'-phosphate as cofactor.

It is found in the cytoplasm. It catalyses the reaction (S)-4-amino-5-oxopentanoate = 5-aminolevulinate. It participates in porphyrin-containing compound metabolism; protoporphyrin-IX biosynthesis; 5-aminolevulinate from L-glutamyl-tRNA(Glu): step 2/2. This Pseudoalteromonas atlantica (strain T6c / ATCC BAA-1087) protein is Glutamate-1-semialdehyde 2,1-aminomutase.